Consider the following 263-residue polypeptide: Acetylglutamate kinase (263 aa).

Substrate-binding positions include 48–49 (GG), arginine 70, and asparagine 162.

The protein belongs to the acetylglutamate kinase family. ArgB subfamily.

Its subcellular location is the cytoplasm. The catalysed reaction is N-acetyl-L-glutamate + ATP = N-acetyl-L-glutamyl 5-phosphate + ADP. It participates in amino-acid biosynthesis; L-arginine biosynthesis; N(2)-acetyl-L-ornithine from L-glutamate: step 2/4. Functionally, catalyzes the ATP-dependent phosphorylation of N-acetyl-L-glutamate. The protein is Acetylglutamate kinase of Vibrio vulnificus (strain CMCP6).